The primary structure comprises 513 residues: Carotenoid isomerooxygenase (513 aa).

Fe cation contacts are provided by His184, His242, His312, and His503.

This sequence belongs to the carotenoid oxygenase family. The cofactor is Fe(2+).

It carries out the reaction all-trans-zeaxanthin + O2 = (3R)-11-cis-3-hydroxyretinal + (3R)-all-trans-3-hydroxyretinal. The protein operates within cofactor metabolism; retinol metabolism. Catalyzes the oxidative cleavage at the 15,15'-double bond of carotenoids and the simultaneous all-trans to 11-cis isomerization of one cleavage product. Carotenoids like 11-cis retinal can promote visual pigment biogenesis in the dark. Essential for the biosynthesis of the 3-hydroxyretinal chromophore of rhodopsin from zeaxanthin and for proper photoreceptor development. The sequence is that of Carotenoid isomerooxygenase (ninaB) from Galleria mellonella (Greater wax moth).